The primary structure comprises 442 residues: Lipoyl synthase, apicoplast (442 aa).

Positions 1-25 are cleaved as a signal peptide; sequence MHVLTPSLYIYAFFIVCVRLKCGRS. The disordered stretch occupies residues 92 to 154; the sequence is LLRSESATDE…EKKPDWFHVP (63 aa). Over residues 109 to 127 the composition is skewed to basic and acidic residues; sequence LKEKLKESPANWGKDKQEE. Positions 177, 182, 188, 203, 207, 210, and 418 each coordinate [4Fe-4S] cluster. A Radical SAM core domain is found at 189 to 407; the sequence is WNIGTATIML…KEEGMKMGFK (219 aa).

This sequence belongs to the radical SAM superfamily. Lipoyl synthase family. [4Fe-4S] cluster is required as a cofactor.

It is found in the plastid. The protein localises to the apicoplast. It catalyses the reaction [[Fe-S] cluster scaffold protein carrying a second [4Fe-4S](2+) cluster] + N(6)-octanoyl-L-lysyl-[protein] + 2 oxidized [2Fe-2S]-[ferredoxin] + 2 S-adenosyl-L-methionine + 4 H(+) = [[Fe-S] cluster scaffold protein] + N(6)-[(R)-dihydrolipoyl]-L-lysyl-[protein] + 4 Fe(3+) + 2 hydrogen sulfide + 2 5'-deoxyadenosine + 2 L-methionine + 2 reduced [2Fe-2S]-[ferredoxin]. It participates in protein modification; protein lipoylation via endogenous pathway; protein N(6)-(lipoyl)lysine from octanoyl-[acyl-carrier-protein]: step 2/2. Its function is as follows. Catalyzes the radical-mediated insertion of two sulfur atoms into the C-6 and C-8 positions of the octanoyl moiety bound to the lipoyl domains of lipoate-dependent enzymes, thereby converting the octanoylated domains into lipoylated derivatives. The polypeptide is Lipoyl synthase, apicoplast (Plasmodium vivax (strain Salvador I)).